We begin with the raw amino-acid sequence, 31 residues long: Electron transfer flavoprotein-ubiquinone oxidoreductase (31 aa).

11-25 (VVIVGAGGAGLSAAI) contacts FAD.

In terms of assembly, monomer. [4Fe-4S] cluster is required as a cofactor. Requires FAD as cofactor.

It catalyses the reaction a ubiquinone + reduced [electron-transfer flavoprotein] = a ubiquinol + oxidized [electron-transfer flavoprotein] + H(+). Its function is as follows. Accepts electrons from ETF and reduces ubiquinone. This is Electron transfer flavoprotein-ubiquinone oxidoreductase from Paracoccus denitrificans.